We begin with the raw amino-acid sequence, 469 residues long: Protein POLLENLESS 3-LIKE 1 (469 aa).

Positions 1–20 (MRRRESRGAKGGGFLTPPPS) are disordered. TPR repeat units lie at residues 88–121 (DSALKDMVVVLKQLNRFDEGIEAIKSFRYLCPFE), 124–157 (DSIDNLLLELYMKSGRITEVAELLEHKLRTLEQD), and 184–217 (ARILGNLAWVHLQLHNYGIAEQYYRNALSLEPDN). Residues 139 to 191 (RITEVAELLEHKLRTLEQDKHYGGRIKIAKRSHEEQNNKTIEQEKARILGNLA) adopt a coiled-coil conformation. The segment covering 314-338 (NIHKTNSHASSESVEQNSPGLTTQP) has biased composition (polar residues). Residues 314-339 (NIHKTNSHASSESVEQNSPGLTTQPR) are disordered.

The protein belongs to the MS5 protein family. Expressed in floral and vegetative organs. Also barely detectable in leaves and stems.

The protein localises to the nucleus. In terms of biological role, probably involved in the regulation of cell division. This is Protein POLLENLESS 3-LIKE 1 from Arabidopsis thaliana (Mouse-ear cress).